A 385-amino-acid chain; its full sequence is Protein pelota homolog (385 aa).

Lysine 162 is covalently cross-linked (Glycyl lysine isopeptide (Lys-Gly) (interchain with G-Cter in SUMO2)). Phosphoserine occurs at positions 374, 380, 381, and 382.

Belongs to the eukaryotic release factor 1 family. Pelota subfamily. Component of the Pelota-HBS1L complex, also named Dom34-Hbs1 complex, composed of PELO and HBS1L. Interacts with PINK1. Interacts with ABCE1. Interacts with CNOT4. The cofactor is a divalent metal cation.

It localises to the cytoplasm. In terms of biological role, component of the Pelota-HBS1L complex, a complex that recognizes stalled ribosomes and triggers the No-Go Decay (NGD) pathway. In the Pelota-HBS1L complex, PELO recognizes ribosomes stalled at the 3' end of an mRNA and engages stalled ribosomes by destabilizing mRNA in the mRNA channel. Following mRNA extraction from stalled ribosomes by the SKI complex, the Pelota-HBS1L complex promotes recruitment of ABCE1, which drives the disassembly of stalled ribosomes, followed by degradation of damaged mRNAs as part of the NGD pathway. As part of the PINK1-regulated signaling, upon mitochondrial damage is recruited to the ribosome/mRNA-ribonucleoprotein complex associated to mitochondrial outer membrane thereby enabling the recruitment of autophagy receptors and induction of mitophagy. The protein is Protein pelota homolog (PELO) of Pongo abelii (Sumatran orangutan).